A 216-amino-acid chain; its full sequence is Octanoyltransferase (216 aa).

The BPL/LPL catalytic domain maps to 35-213 (NSNPDFIWIG…IIQEEFNFDF (179 aa)). Residues 77–84 (RGGEVTCH), 144–146 (SIG), and 157–159 (GFS) contribute to the substrate site. C175 acts as the Acyl-thioester intermediate in catalysis.

It belongs to the LipB family.

The protein localises to the cytoplasm. It carries out the reaction octanoyl-[ACP] + L-lysyl-[protein] = N(6)-octanoyl-L-lysyl-[protein] + holo-[ACP] + H(+). Its pathway is protein modification; protein lipoylation via endogenous pathway; protein N(6)-(lipoyl)lysine from octanoyl-[acyl-carrier-protein]: step 1/2. Catalyzes the transfer of endogenously produced octanoic acid from octanoyl-acyl-carrier-protein onto the lipoyl domains of lipoate-dependent enzymes. Lipoyl-ACP can also act as a substrate although octanoyl-ACP is likely to be the physiological substrate. This chain is Octanoyltransferase, found in Prochlorococcus marinus (strain MIT 9215).